The sequence spans 691 residues: DNA ligase (691 aa).

NAD(+) is bound by residues 41–45 (DAEYD), 90–91 (SL), and Glu130. Catalysis depends on Lys132, which acts as the N6-AMP-lysine intermediate. Positions 153, 190, 307, and 331 each coordinate NAD(+). Residues Cys425, Cys428, Cys443, and Cys449 each contribute to the Zn(2+) site. Residues 610–691 (APQGVLAGKT…MHTLLEGHAR (82 aa)) enclose the BRCT domain.

This sequence belongs to the NAD-dependent DNA ligase family. LigA subfamily. Requires Mg(2+) as cofactor. Mn(2+) serves as cofactor.

The catalysed reaction is NAD(+) + (deoxyribonucleotide)n-3'-hydroxyl + 5'-phospho-(deoxyribonucleotide)m = (deoxyribonucleotide)n+m + AMP + beta-nicotinamide D-nucleotide.. DNA ligase that catalyzes the formation of phosphodiester linkages between 5'-phosphoryl and 3'-hydroxyl groups in double-stranded DNA using NAD as a coenzyme and as the energy source for the reaction. It is essential for DNA replication and repair of damaged DNA. The polypeptide is DNA ligase (Burkholderia pseudomallei (strain K96243)).